The following is a 114-amino-acid chain: Peroxisomal biogenesis factor 39 (114 aa).

Disordered stretches follow at residues 1 to 26 and 53 to 114; these read MSWW…AEPA and ITAT…PRVS. Ser102 is subject to Phosphoserine.

Its subcellular location is the peroxisome. Functionally, may be a peroxin involved in the PTS2-mediated protein import pathway. The sequence is that of Peroxisomal biogenesis factor 39 (Pex39) from Mus musculus (Mouse).